The chain runs to 400 residues: MSSKLVLVLNCGSSSLKFAIIDAINGEEYLSGLAECFNLPEARIKWKMDGGKQDAELGAGAAHSEALNFIVNTILSQKPELSAQLVAIGHRIVHGGEKFTKSAIITDDVLQGIKDSVPFAPLHNPAHLIGIDEALKSFPHLTDKNVAVFDTAFHQTMPEESYLYALPYKLYKENHIRRYGAHGTSHYFVSREAAKVLNKPVEELNVITCHLGNGGSVTAIRNGECVDTSMGLTPLEGLVMGTRSGDIDPAIIFHLHDALGMDVASINTLLTKESGLLGLTEVTSDCRYVEDNYETKADAKRAMDVYCHRLAKYIGSYAALMEGRLDAVIFTGGIGENAAMVRELSLKKLGLLGFDVDHERNLAARFGKGGNIAKDGTRPALVIPTNEELVIAEDAYRLTA.

N10 serves as a coordination point for Mg(2+). Residue K17 participates in ATP binding. A substrate-binding site is contributed by R91. Residue D150 is the Proton donor/acceptor of the active site. ATP contacts are provided by residues 210-214, 285-287, and 333-337; these read HLGNG, DCR, and GIGEN. E387 contributes to the Mg(2+) binding site.

Belongs to the acetokinase family. As to quaternary structure, homodimer. It depends on Mg(2+) as a cofactor. Mn(2+) is required as a cofactor.

Its subcellular location is the cytoplasm. The catalysed reaction is acetate + ATP = acetyl phosphate + ADP. It functions in the pathway metabolic intermediate biosynthesis; acetyl-CoA biosynthesis; acetyl-CoA from acetate: step 1/2. Catalyzes the formation of acetyl phosphate from acetate and ATP. Can also catalyze the reverse reaction. The sequence is that of Acetate kinase from Pectobacterium atrosepticum (strain SCRI 1043 / ATCC BAA-672) (Erwinia carotovora subsp. atroseptica).